The sequence spans 253 residues: Chitooligosaccharide deacetylase (253 aa).

Mg(2+)-binding residues include His-61 and His-126.

The protein belongs to the YdjC deacetylase family. ChbG subfamily. Homodimer. Mg(2+) is required as a cofactor.

Its subcellular location is the cytoplasm. The enzyme catalyses N,N'-diacetylchitobiose + H2O = N-acetyl-beta-D-glucosaminyl-(1-&gt;4)-D-glucosamine + acetate. It catalyses the reaction diacetylchitobiose-6'-phosphate + H2O = N'-monoacetylchitobiose-6'-phosphate + acetate. Its pathway is glycan degradation; chitin degradation. Involved in the degradation of chitin. ChbG is essential for growth on the acetylated chitooligosaccharides chitobiose and chitotriose but is dispensable for growth on cellobiose and chitosan dimer, the deacetylated form of chitobiose. Deacetylation of chitobiose-6-P and chitotriose-6-P is necessary for both the activation of the chb promoter by the regulatory protein ChbR and the hydrolysis of phosphorylated beta-glucosides by the phospho-beta-glucosidase ChbF. Catalyzes the removal of only one acetyl group from chitobiose-6-P to yield monoacetylchitobiose-6-P, the inducer of ChbR and the substrate of ChbF. The sequence is that of Chitooligosaccharide deacetylase from Yersinia enterocolitica serotype O:8 / biotype 1B (strain NCTC 13174 / 8081).